A 269-amino-acid polypeptide reads, in one-letter code: MLGPGQVRLRPRVWRDKAGGRVADGASGLPPARGSWRETGTGRALGASSPPRPAQGSSSPGIQSGPSSRPGSPRGAEQAGTPRPRLSLGISQATGSAARWRTRRTGKGLGYNSDEIRPRTLLIEHLMEGGRRDHHTMTVLWGTQEIIVAEFHKKIKEAFEVFDHESNNTVDVREIGTIIRSLGCCPTEGELHDLIAEVEEEEPTGYIRFEKFLPVMTEILLERKYRPIPEDVLLRAFEVLDSAKRGFLTKDELIKYMTEEDGVSLRRPG.

Residues 1-113 (MLGPGQVRLR…RTGKGLGYNS (113 aa)) form a disordered region. Positions 54–76 (AQGSSSPGIQSGPSSRPGSPRGA) are enriched in low complexity. EF-hand domains follow at residues 150-185 (EFHKKIKEAFEVFDHESNNTVDVREIGTIIRSLGCC) and 228-263 (IPEDVLLRAFEVLDSAKRGFLTKDELIKYMTEEDGV).

The protein belongs to the DRC8 family. As to quaternary structure, component of the nexin-dynein regulatory complex (N-DRC).

It localises to the cytoplasm. The protein resides in the cytoskeleton. Its subcellular location is the flagellum axoneme. In terms of biological role, component of the nexin-dynein regulatory complex (N-DRC), a key regulator of ciliary/flagellar motility which maintains the alignment and integrity of the distal axoneme and regulates microtubule sliding in motile axonemes. This is Dynein regulatory complex protein 8 (EFCAB2) from Homo sapiens (Human).